The following is a 378-amino-acid chain: Nitronate monooxygenase (378 aa).

A propeptide spanning residues 1–15 (MHFPGHSSKKEESAQ) is cleaved from the precursor. FMN is bound at residue 37–39 (PMY). Residue His-196 is the Proton acceptor of the active site. His-196 is a binding site for substrate. FMN is bound by residues 229–231 (AGG) and 252–253 (GT).

This sequence belongs to the nitronate monooxygenase family. NMO class II subfamily. Homodimer. Requires FMN as cofactor.

The catalysed reaction is ethylnitronate + O2 = chemical entity + acetaldehyde + nitrite + H(+). In terms of biological role, catalyzes the oxidation of alkyl nitronates to produce the corresponding carbonyl compounds and nitrites. Anionic forms of nitroalkanes are much better substrates than are neutral forms. This Neurospora crassa (strain ATCC 24698 / 74-OR23-1A / CBS 708.71 / DSM 1257 / FGSC 987) protein is Nitronate monooxygenase (ncd-2).